We begin with the raw amino-acid sequence, 395 residues long: NAD(P)H-quinone oxidoreductase subunit H (395 aa).

The protein belongs to the complex I 49 kDa subunit family. As to quaternary structure, NDH-1 can be composed of about 15 different subunits; different subcomplexes with different compositions have been identified which probably have different functions.

It is found in the cellular thylakoid membrane. It catalyses the reaction a plastoquinone + NADH + (n+1) H(+)(in) = a plastoquinol + NAD(+) + n H(+)(out). It carries out the reaction a plastoquinone + NADPH + (n+1) H(+)(in) = a plastoquinol + NADP(+) + n H(+)(out). Functionally, NDH-1 shuttles electrons from an unknown electron donor, via FMN and iron-sulfur (Fe-S) centers, to quinones in the respiratory and/or the photosynthetic chain. The immediate electron acceptor for the enzyme in this species is believed to be plastoquinone. Couples the redox reaction to proton translocation, and thus conserves the redox energy in a proton gradient. Cyanobacterial NDH-1 also plays a role in inorganic carbon-concentration. This is NAD(P)H-quinone oxidoreductase subunit H from Prochlorococcus marinus (strain MIT 9301).